The following is a 217-amino-acid chain: Probable GTP-binding protein EngB (217 aa).

An EngB-type G domain is found at 44 to 217 (DRIEVCFAGR…TLRTIVATLG (174 aa)). Residues 52–59 (GRSNVGKS), 79–83 (GRTQE), 97–100 (DLPG), 164–167 (TKAD), and 198–200 (TSS) each bind GTP. Mg(2+) is bound by residues serine 59 and threonine 81.

Belongs to the TRAFAC class TrmE-Era-EngA-EngB-Septin-like GTPase superfamily. EngB GTPase family. It depends on Mg(2+) as a cofactor.

Functionally, necessary for normal cell division and for the maintenance of normal septation. The chain is Probable GTP-binding protein EngB from Cereibacter sphaeroides (strain ATCC 17023 / DSM 158 / JCM 6121 / CCUG 31486 / LMG 2827 / NBRC 12203 / NCIMB 8253 / ATH 2.4.1.) (Rhodobacter sphaeroides).